A 278-amino-acid chain; its full sequence is uncharacterized protein (278 aa).

An N-terminal signal peptide occupies residues 1–20 (MSPLIVGTLIIILLSGLATA). Residue G96 is the site of GPI-anchor amidated glycine attachment. A propeptide spans 97–278 (TFLTSPTAKR…QLIMQTFNGS (182 aa)) (removed in mature form).

The protein localises to the cell membrane. This is an uncharacterized protein from Schizosaccharomyces pombe (strain 972 / ATCC 24843) (Fission yeast).